The sequence spans 283 residues: Formamidopyrimidine-DNA glycosylase (283 aa).

Pro2 serves as the catalytic Schiff-base intermediate with DNA. Catalysis depends on Glu3, which acts as the Proton donor. Catalysis depends on Lys58, which acts as the Proton donor; for beta-elimination activity. The DNA site is built by His100, Arg119, and Arg162. Residues 247 to 283 form an FPG-type zinc finger; that stretch reads RVYGREGLPCVTPGCSGTVGRIVQSGRSSFHCPLCQR. Arg273 (proton donor; for delta-elimination activity) is an active-site residue.

The protein belongs to the FPG family. In terms of assembly, monomer. It depends on Zn(2+) as a cofactor.

It carries out the reaction Hydrolysis of DNA containing ring-opened 7-methylguanine residues, releasing 2,6-diamino-4-hydroxy-5-(N-methyl)formamidopyrimidine.. The enzyme catalyses 2'-deoxyribonucleotide-(2'-deoxyribose 5'-phosphate)-2'-deoxyribonucleotide-DNA = a 3'-end 2'-deoxyribonucleotide-(2,3-dehydro-2,3-deoxyribose 5'-phosphate)-DNA + a 5'-end 5'-phospho-2'-deoxyribonucleoside-DNA + H(+). Its function is as follows. Involved in base excision repair of DNA damaged by oxidation or by mutagenic agents. Acts as a DNA glycosylase that recognizes and removes damaged bases. Has a preference for oxidized purines, such as 7,8-dihydro-8-oxoguanine (8-oxoG). Has AP (apurinic/apyrimidinic) lyase activity and introduces nicks in the DNA strand. Cleaves the DNA backbone by beta-delta elimination to generate a single-strand break at the site of the removed base with both 3'- and 5'-phosphates. The sequence is that of Formamidopyrimidine-DNA glycosylase from Cereibacter sphaeroides (strain KD131 / KCTC 12085) (Rhodobacter sphaeroides).